A 187-amino-acid polypeptide reads, in one-letter code: Protein canopy-1 (187 aa).

A signal peptide spans 1-24 (MSPWIKHICLVLVAAFMLVKTTES). In terms of domain architecture, Saposin B-type spans 28–181 (EALYCSACMA…EVSDHCKSSV (154 aa)). 3 cysteine pairs are disulfide-bonded: Cys-32–Cys-177, Cys-35–Cys-170, and Cys-90–Cys-143. The Prevents secretion from ER signature appears at 184–187 (HSEL).

It belongs to the canopy family. As to quaternary structure, homodimer. Interacts with fgfr1.

The protein localises to the endoplasmic reticulum. Its function is as follows. Involved in the maintenance of the midbrain-hindbrain boundary (MHB) organizer. Contributes to a positive-feedback loop of FGF signaling in the MHB, enabling the MHB to exert its role as an organizer for the tectal and cerebellar development. The chain is Protein canopy-1 (cnpy1) from Danio rerio (Zebrafish).